Consider the following 133-residue polypeptide: Small ribosomal subunit protein uS8 (133 aa).

Belongs to the universal ribosomal protein uS8 family. Part of the 30S ribosomal subunit.

Functionally, one of the primary rRNA binding proteins, it binds directly to 16S rRNA central domain where it helps coordinate assembly of the platform of the 30S subunit. The chain is Small ribosomal subunit protein uS8 from Aeropyrum pernix (strain ATCC 700893 / DSM 11879 / JCM 9820 / NBRC 100138 / K1).